Reading from the N-terminus, the 887-residue chain is Kinesin-like protein KIF20A (887 aa).

Ser-2 bears the N-acetylserine mark. Phosphoserine is present on residues Ser-7, Ser-14, and Ser-21. Positions 63-506 (KVKVYLRIRP…AKFSALASQL (444 aa)) constitute a Kinesin motor domain. 159–166 (GVTNSGKT) lines the ATP pocket. Phosphoserine; by PLK1 is present on Ser-527. A disordered region spans residues 527 to 553 (SPQVGPGLEKEDKADSDLEDSPEDEAD). The span at 543-553 (DLEDSPEDEAD) shows a compositional bias: acidic residues. A coiled-coil region spans residues 559-804 (KEELLQVVEA…VLVKLDLQKK (246 aa)). Phosphoserine is present on residues Ser-683 and Ser-823. Positions 805–887 (AACIAEQYHT…LLKSPFGKKY (83 aa)) are globular. Residues 826–875 (KRLGANQENQQPNHQPPGKKPFLRNLLPRTPTCQSSTDSSPYARILRSRH) form a disordered region. A Phosphothreonine modification is found at Thr-855. Residues 856 to 865 (PTCQSSTDSS) show a composition bias toward polar residues. 3 positions are modified to phosphoserine: Ser-865, Ser-876, and Ser-881.

The protein belongs to the TRAFAC class myosin-kinesin ATPase superfamily. Kinesin family. In terms of processing, phosphorylated by PLK1 at Ser-527 during mitosis, creating a docking site for PLK1 and recruiting PLK1 at central spindle. In terms of tissue distribution, ubiquitously expressed, with highest levels in spleen and testis.

The protein resides in the golgi apparatus. It is found in the cytoplasm. It localises to the cytoskeleton. The protein localises to the spindle. In terms of biological role, mitotic kinesin required for chromosome passenger complex (CPC)-mediated cytokinesis. Following phosphorylation by PLK1, involved in recruitment of PLK1 to the central spindle. Interacts with guanosine triphosphate (GTP)-bound forms of RAB6A and RAB6B. May act as a motor required for the retrograde RAB6 regulated transport of Golgi membranes and associated vesicles along microtubules. Has a microtubule plus end-directed motility. The protein is Kinesin-like protein KIF20A (Kif20a) of Mus musculus (Mouse).